Consider the following 271-residue polypeptide: Phycocyanobilin lyase subunit alpha (271 aa).

The protein belongs to the CpcE/RpcE/PecE family. As to quaternary structure, cpcE and CpcF associate to form a lyase.

In terms of biological role, required for the chromophorylation of the cpcA1 gene product. The sequence is that of Phycocyanobilin lyase subunit alpha (cpcE1) from Pseudanabaena tenuis (strain PCC 7409).